The chain runs to 566 residues: NAD-dependent malic enzyme (566 aa).

Tyr105 (proton donor) is an active-site residue. Arg158 serves as a coordination point for NAD(+). Residue Lys176 is the Proton acceptor of the active site. Glu247, Asp248, and Asp271 together coordinate a divalent metal cation. NAD(+) contacts are provided by Asp271 and Asn419.

It belongs to the malic enzymes family. In terms of assembly, homotetramer. It depends on Mg(2+) as a cofactor. The cofactor is Mn(2+).

The catalysed reaction is (S)-malate + NAD(+) = pyruvate + CO2 + NADH. It catalyses the reaction oxaloacetate + H(+) = pyruvate + CO2. The sequence is that of NAD-dependent malic enzyme from Acinetobacter baylyi (strain ATCC 33305 / BD413 / ADP1).